The primary structure comprises 129 residues: MGKETTRIRRRERKNIASGIAHVNSSFNNTTITITDAQGNAIAWSSAGTMGFKGSRKSTPYAAQVAAEDVAKKAQEHGMRTLEVEVAGPGSGRESALRALQAAGFTVTSIRDVTTIPHNGCRPRKRRRV.

Belongs to the universal ribosomal protein uS11 family. In terms of assembly, part of the 30S ribosomal subunit. Interacts with proteins S7 and S18. Binds to IF-3.

Functionally, located on the platform of the 30S subunit, it bridges several disparate RNA helices of the 16S rRNA. Forms part of the Shine-Dalgarno cleft in the 70S ribosome. The protein is Small ribosomal subunit protein uS11 of Rhodopseudomonas palustris (strain BisB5).